Here is a 174-residue protein sequence, read N- to C-terminus: Small ribosomal subunit protein uS4 (174 aa).

The S4 RNA-binding domain maps to Arg-105 to Glu-169.

It belongs to the universal ribosomal protein uS4 family. Part of the 30S ribosomal subunit. Contacts protein S5. The interaction surface between S4 and S5 is involved in control of translational fidelity.

Its function is as follows. One of the primary rRNA binding proteins, it binds directly to 16S rRNA where it nucleates assembly of the body of the 30S subunit. In terms of biological role, with S5 and S12 plays an important role in translational accuracy. The chain is Small ribosomal subunit protein uS4 from Natronomonas pharaonis (strain ATCC 35678 / DSM 2160 / CIP 103997 / JCM 8858 / NBRC 14720 / NCIMB 2260 / Gabara) (Halobacterium pharaonis).